A 126-amino-acid polypeptide reads, in one-letter code: Large ribosomal subunit protein uL22 (126 aa).

The protein belongs to the universal ribosomal protein uL22 family. As to quaternary structure, part of the 50S ribosomal subunit.

Functionally, this protein binds specifically to 23S rRNA; its binding is stimulated by other ribosomal proteins, e.g. L4, L17, and L20. It is important during the early stages of 50S assembly. It makes multiple contacts with different domains of the 23S rRNA in the assembled 50S subunit and ribosome. Its function is as follows. The globular domain of the protein is located near the polypeptide exit tunnel on the outside of the subunit, while an extended beta-hairpin is found that lines the wall of the exit tunnel in the center of the 70S ribosome. The chain is Large ribosomal subunit protein uL22 from Jannaschia sp. (strain CCS1).